Reading from the N-terminus, the 513-residue chain is Maturase K (513 aa).

The protein belongs to the intron maturase 2 family. MatK subfamily.

Its subcellular location is the plastid. It localises to the chloroplast. Functionally, usually encoded in the trnK tRNA gene intron. Probably assists in splicing its own and other chloroplast group II introns. The polypeptide is Maturase K (Pinus resinosa (Red pine)).